Consider the following 214-residue polypeptide: MEPLTVVEGLVVPLDRANVDTDAIIPKQFLKSIKRTGFGPNLFDEWRYLDHGEPGKDCRHRPLNPEFVLNQPRYQGANILLARDNFGCGSSREHAVWALVDDGFRVVIAPSFADIFHSNAFKNGLLPIILDEDSVTTLFKDTEATLGYRLRIDLPAQEVTTPEGKVMPFTIDEFRKHCLMEGLDEIGLTLQYRDEIRAYEERRQVEAPWLFEKG.

It belongs to the LeuD family. LeuD type 1 subfamily. Heterodimer of LeuC and LeuD.

It carries out the reaction (2R,3S)-3-isopropylmalate = (2S)-2-isopropylmalate. Its pathway is amino-acid biosynthesis; L-leucine biosynthesis; L-leucine from 3-methyl-2-oxobutanoate: step 2/4. In terms of biological role, catalyzes the isomerization between 2-isopropylmalate and 3-isopropylmalate, via the formation of 2-isopropylmaleate. In Nitrosococcus oceani (strain ATCC 19707 / BCRC 17464 / JCM 30415 / NCIMB 11848 / C-107), this protein is 3-isopropylmalate dehydratase small subunit.